The chain runs to 100 residues: uncharacterized protein (100 aa).

This is an uncharacterized protein from Rhizobium leguminosarum bv. phaseoli.